We begin with the raw amino-acid sequence, 599 residues long: UvrABC system protein C (599 aa).

The GIY-YIG domain maps to 18–96 (QLPGVYRMLG…IKQHRPPYNI (79 aa)). Positions 207-242 (KELNQELIAKMEEAAEQLAFEKAMFYRDRLGLLREV) constitute a UVR domain.

Belongs to the UvrC family. As to quaternary structure, interacts with UvrB in an incision complex.

The protein resides in the cytoplasm. Functionally, the UvrABC repair system catalyzes the recognition and processing of DNA lesions. UvrC both incises the 5' and 3' sides of the lesion. The N-terminal half is responsible for the 3' incision and the C-terminal half is responsible for the 5' incision. The polypeptide is UvrABC system protein C (Acinetobacter baylyi (strain ATCC 33305 / BD413 / ADP1)).